The following is a 24-amino-acid chain: Attacin (24 aa).

This sequence belongs to the attacin/sarcotoxin-2 family.

Its subcellular location is the secreted. Its function is as follows. Hemolymph antibacterial protein. This is Attacin from Heliothis virescens (Tobacco budworm moth).